The chain runs to 324 residues: HTH-type transcriptional regulator CysB (324 aa).

An HTH lysR-type domain is found at 1-59; it reads MKLQQLRYIVEVVNHNLNVSSTAEGLYTSQPGISKQVRMLEDELGIQIFARSGKHLTQV. The H-T-H motif DNA-binding region spans 19–38; the sequence is VSSTAEGLYTSQPGISKQVR.

This sequence belongs to the LysR transcriptional regulatory family. In terms of assembly, homotetramer.

The protein localises to the cytoplasm. This protein is a positive regulator of gene expression for the cysteine regulon. The inducer for CysB is N-acetylserine. Thiosulfate and sulfide act as anti-inducers. This chain is HTH-type transcriptional regulator CysB (cysB), found in Klebsiella pneumoniae.